Reading from the N-terminus, the 349-residue chain is Protein-glutamate methylesterase/protein-glutamine glutaminase (349 aa).

In terms of domain architecture, Response regulatory spans 2–118 (RVLVVDDSAL…VDLSSVAQEL (117 aa)). D52 is subject to 4-aspartylphosphate. The 187-residue stretch at 159–345 (VLIGSSTGGP…EEIVRFLEVK (187 aa)) folds into the CheB-type methylesterase domain. Active-site residues include S164, H191, and D287.

This sequence belongs to the CheB family. In terms of processing, phosphorylated by CheA. Phosphorylation of the N-terminal regulatory domain activates the methylesterase activity.

The protein resides in the cytoplasm. It carries out the reaction [protein]-L-glutamate 5-O-methyl ester + H2O = L-glutamyl-[protein] + methanol + H(+). It catalyses the reaction L-glutaminyl-[protein] + H2O = L-glutamyl-[protein] + NH4(+). In terms of biological role, involved in chemotaxis. Part of a chemotaxis signal transduction system that modulates chemotaxis in response to various stimuli. Catalyzes the demethylation of specific methylglutamate residues introduced into the chemoreceptors (methyl-accepting chemotaxis proteins or MCP) by CheR. Also mediates the irreversible deamidation of specific glutamine residues to glutamic acid. This chain is Protein-glutamate methylesterase/protein-glutamine glutaminase, found in Archaeoglobus fulgidus (strain ATCC 49558 / DSM 4304 / JCM 9628 / NBRC 100126 / VC-16).